Here is a 376-residue protein sequence, read N- to C-terminus: Growth/differentiation factor 8 (376 aa).

The N-terminal stretch at 1–22 is a signal peptide; sequence MHLSQIVLYLSLLIALGPVVLS. The propeptide occupies 23–267; it reads DQEAHQQPSV…ISEGPRRARR (245 aa). Disulfide bonds link Cys-273/Cys-283, Cys-282/Cys-341, Cys-310/Cys-373, and Cys-314/Cys-375.

Belongs to the TGF-beta family. As to quaternary structure, homodimer; disulfide-linked. As to expression, highly expressed in muscle. Also expressed in other tissues such as eye, gill, ovary, gut and brain. Very low level detected in testis. Not expressed in liver, kidney, stomach or heart.

The protein localises to the secreted. Functionally, acts specifically as a negative regulator of skeletal muscle growth. In Oreochromis mossambicus (Mozambique tilapia), this protein is Growth/differentiation factor 8.